The following is a 241-amino-acid chain: Triosephosphate isomerase (241 aa).

Substrate is bound at residue 9–11; that stretch reads NWK. His-96 serves as the catalytic Electrophile. Glu-165 (proton acceptor) is an active-site residue. Substrate is bound by residues Gly-171, Ser-204, and 225–226; that span reads GG.

The protein belongs to the triosephosphate isomerase family. In terms of assembly, homodimer.

It is found in the cytoplasm. It catalyses the reaction D-glyceraldehyde 3-phosphate = dihydroxyacetone phosphate. It functions in the pathway carbohydrate biosynthesis; gluconeogenesis. The protein operates within carbohydrate degradation; glycolysis; D-glyceraldehyde 3-phosphate from glycerone phosphate: step 1/1. Its function is as follows. Involved in the gluconeogenesis. Catalyzes stereospecifically the conversion of dihydroxyacetone phosphate (DHAP) to D-glyceraldehyde-3-phosphate (G3P). This Prochlorococcus marinus (strain MIT 9312) protein is Triosephosphate isomerase.